A 164-amino-acid polypeptide reads, in one-letter code: Phosphopantetheine adenylyltransferase (164 aa).

S9 provides a ligand contact to substrate. Residues 9 to 10 and H17 contribute to the ATP site; that span reads SF. K41, V78, and R92 together coordinate substrate. ATP-binding positions include 93–95, E103, and 128–134; these read GLR and SRPITAT.

The protein belongs to the bacterial CoaD family. As to quaternary structure, homohexamer. It depends on Mg(2+) as a cofactor.

The protein localises to the cytoplasm. It carries out the reaction (R)-4'-phosphopantetheine + ATP + H(+) = 3'-dephospho-CoA + diphosphate. It functions in the pathway cofactor biosynthesis; coenzyme A biosynthesis; CoA from (R)-pantothenate: step 4/5. Functionally, reversibly transfers an adenylyl group from ATP to 4'-phosphopantetheine, yielding dephospho-CoA (dPCoA) and pyrophosphate. This chain is Phosphopantetheine adenylyltransferase, found in Sinorhizobium fredii (strain NBRC 101917 / NGR234).